Consider the following 317-residue polypeptide: 3'-5' exoribonuclease YhaM (317 aa).

Residues 17–90 (FLLIKESTRG…QLKILSIRLS (74 aa)) constitute a DNA-binding region (OB). An HD domain is found at 163-279 (HVVSMLAIGK…LHLIDLIDAK (117 aa)).

It belongs to the YhaM family.

Functionally, shows a 3'-5' exoribonuclease activity. This chain is 3'-5' exoribonuclease YhaM, found in Oceanobacillus iheyensis (strain DSM 14371 / CIP 107618 / JCM 11309 / KCTC 3954 / HTE831).